The sequence spans 152 residues: Transcriptional regulator MraZ (152 aa).

SpoVT-AbrB domains follow at residues 5-51 (VNSI…PLPE) and 80-123 (AAEC…DEVL).

It belongs to the MraZ family. In terms of assembly, forms oligomers.

The protein resides in the cytoplasm. It localises to the nucleoid. The chain is Transcriptional regulator MraZ from Methylococcus capsulatus (strain ATCC 33009 / NCIMB 11132 / Bath).